A 1036-amino-acid polypeptide reads, in one-letter code: Non-canonical non-ribosomal peptide synthetase FUB8 (1036 aa).

Residues 21–343 (EIARDEPDRV…LASVVTHPDE (323 aa)) form an adenylation (A) domain region. In terms of domain architecture, Carrier spans 544-621 (TTEDVVRSGI…QLAHTVWSHL (78 aa)). An O-(pantetheine 4'-phosphoryl)serine modification is found at S579. The thioester reductase (TR) domain stretch occupies residues 658 to 899 (LTGTTGEIGS…IPIDLLTEVI (242 aa)).

It functions in the pathway mycotoxin biosynthesis. Functionally, non-canonical non-ribosomal peptide synthetase; part of the gene cluster that mediates the biosynthesis of fusaric acid, a mycotoxin with low to moderate toxicity to animals and humans, but with high phytotoxic properties. L-aspartate is suggested as fusaric acid amino acid precursor that is activated and further processed to O-acetyl-L-homoserine by cluster enzymes aspartate kinase FUB3 and homoserine O-acetyltransferase FUB5, as well as enzymes of the primary metabolism. The polyketide synthase (PKS) FUB1 generates the triketide trans-2-hexenal which is presumptively released by the hydrolase FUB4 and linked to the NRPS-bound amino acid precursor by NAD(P)-dependent dehydrogenase FUB6. FUB1, FUB4, and the non-canonical NRPS Fub8 may form an enzyme complex. Further processing of the NRPS-bound intermediate might be carried out by FUB6 and the sulfhydrylase FUB7, enabling a spontaneous electrocyclization to close the carbon backbone of fusaric acid. Dihydrofusaric acid is likely to be released via reduction by the thioester reductase (TR) domain of FUB8 whereupon the final oxidation to fusaric acid may (also) be performed by the FMN-dependent dehydrogenase FUB9. This chain is Non-canonical non-ribosomal peptide synthetase FUB8, found in Fusarium oxysporum f. sp. lycopersici (strain 4287 / CBS 123668 / FGSC 9935 / NRRL 34936) (Fusarium vascular wilt of tomato).